A 193-amino-acid polypeptide reads, in one-letter code: uncharacterized protein (193 aa).

The interval 1-84 (MTSKCSKWHE…RRSNQRIQLY (84 aa)) is disordered. A compositionally biased stretch (basic residues) spans 43–78 (SSPRRSSPRRSPRRSSPRRSSPRRSSPRRSSPRRSN).

This sequence belongs to the IIV-6 378R family.

This is an uncharacterized protein from Invertebrate iridescent virus 6 (IIV-6).